The sequence spans 212 residues: MKQLFRQWYDLSEIKKELTTRNWFPATSGNISIKVSHEPLTFLITASGKDKTKTTPDDFLLVDHLGVPVLETELRPSAETILHTHIYNNTNAGCVLHVHTTDNNVITNLYSDAVTLQNQEIIKALDIWEEGATIHIPIIENHAHIPTLGENFRKHIQGDSGAVLIRNHGITVWGRDSFDAKKRLEAYEFLFQFHIKLLSIQGGVSNGANSYS.

Residues histidine 97 and histidine 99 each contribute to the Zn(2+) site.

Belongs to the aldolase class II family. MtnB subfamily. Homotetramer. It depends on Zn(2+) as a cofactor.

It catalyses the reaction 5-(methylsulfanyl)-D-ribulose 1-phosphate = 5-methylsulfanyl-2,3-dioxopentyl phosphate + H2O. The protein operates within amino-acid biosynthesis; L-methionine biosynthesis via salvage pathway; L-methionine from S-methyl-5-thio-alpha-D-ribose 1-phosphate: step 2/6. Catalyzes the dehydration of methylthioribulose-1-phosphate (MTRu-1-P) into 2,3-diketo-5-methylthiopentyl-1-phosphate (DK-MTP-1-P). The protein is Methylthioribulose-1-phosphate dehydratase of Bacillus thuringiensis (strain Al Hakam).